The following is an 879-amino-acid chain: Putative ankyrin repeat protein L88 (879 aa).

ANK repeat units lie at residues 22–62 (KGFT…QKNK), 63–96 (KGYT…KTNI), 100–133 (EGIT…DINA), 137–170 (NGYT…NIDD), 174–207 (NGLT…DINA), 211–241 (NGRT…DIEA), 245–278 (KGLT…NIEA), 282–313 (KLRT…NIET), 317–347 (RNNT…NINH), 351–384 (EGCN…NINN), 387–420 (SERT…DPNI), 424–463 (NGNT…NPNF), 470–499 (NSLT…DINS), 506–542 (SALL…DVNI), 546–578 (NGNT…NPNT), 674–704 (SGIT…DPNI), and 708–738 (KGET…NPYI).

In Acanthamoeba polyphaga mimivirus (APMV), this protein is Putative ankyrin repeat protein L88.